The primary structure comprises 300 residues: Acetylglutamate kinase (300 aa).

Substrate is bound by residues 73-74 (GG), arginine 95, and asparagine 197.

Belongs to the acetylglutamate kinase family. ArgB subfamily.

The protein resides in the cytoplasm. It carries out the reaction N-acetyl-L-glutamate + ATP = N-acetyl-L-glutamyl 5-phosphate + ADP. It participates in amino-acid biosynthesis; L-arginine biosynthesis; N(2)-acetyl-L-ornithine from L-glutamate: step 2/4. Catalyzes the ATP-dependent phosphorylation of N-acetyl-L-glutamate. The polypeptide is Acetylglutamate kinase (Bordetella petrii (strain ATCC BAA-461 / DSM 12804 / CCUG 43448)).